Consider the following 78-residue polypeptide: Large ribosomal subunit protein bL28 (78 aa).

A disordered region spans residues 1-20; the sequence is MSRVCQVTGKRPAVGNNRSH.

Belongs to the bacterial ribosomal protein bL28 family.

The chain is Large ribosomal subunit protein bL28 from Actinobacillus succinogenes (strain ATCC 55618 / DSM 22257 / CCUG 43843 / 130Z).